The following is a 325-amino-acid chain: tRNA dimethylallyltransferase (325 aa).

12 to 19 (GPTASGKT) is an ATP binding site. 14–19 (TASGKT) serves as a coordination point for substrate. 3 interaction with substrate tRNA regions span residues 37 to 40 (DSAL), 161 to 165 (QRIHR), and 244 to 249 (RCVGYR).

Belongs to the IPP transferase family. In terms of assembly, monomer. Mg(2+) is required as a cofactor.

It catalyses the reaction adenosine(37) in tRNA + dimethylallyl diphosphate = N(6)-dimethylallyladenosine(37) in tRNA + diphosphate. In terms of biological role, catalyzes the transfer of a dimethylallyl group onto the adenine at position 37 in tRNAs that read codons beginning with uridine, leading to the formation of N6-(dimethylallyl)adenosine (i(6)A). The protein is tRNA dimethylallyltransferase of Chromobacterium violaceum (strain ATCC 12472 / DSM 30191 / JCM 1249 / CCUG 213 / NBRC 12614 / NCIMB 9131 / NCTC 9757 / MK).